A 508-amino-acid chain; its full sequence is UBX domain-containing protein 4 (508 aa).

Residues 1–200 (MLWFQGAIPA…PAEDLNIRVE (200 aa)) are interaction with UBQLN1. The Cytoplasmic portion of the chain corresponds to 1-413 (MLWFQGAIPA…VHSSSGDIWT (413 aa)). Polar residues-rich tracts occupy residues 117–151 (SETS…QSRN) and 160–187 (TSDT…SGCS). The tract at residues 117–196 (SETSVANGSQ…SDQRPAEDLN (80 aa)) is disordered. In terms of domain architecture, UBX spans 315–393 (ERSTVARIQF…ELAPSASVVL (79 aa)). An intramembrane segment occupies 414-434 (LLGTVLYPFLAIWRLISNFLF). The Cytoplasmic segment spans residues 435–508 (SNPPPTQTSV…TWNGNSTQQM (74 aa)). The interval 440–508 (TQTSVRVTSS…TWNGNSTQQM (69 aa)) is disordered. Polar residues predominate over residues 441–458 (QTSVRVTSSEPPNPASSS). The span at 459–491 (KSEKREPVRKRVLEKRGDDFKKEGKIYRLRTQD) shows a compositional bias: basic and acidic residues. Thr-489 bears the Phosphothreonine mark. Positions 498–508 (NTWNGNSTQQM) are enriched in polar residues.

As to quaternary structure, directly interacts with VCP. Interacts with UBQLN1. Forms a complex with VCP and UBQLN1. As to expression, expressed in many tissues, including heart, brain, placenta, lung, liver, skeletal muscle, kidney and pancreas. Accumulates in Alzheimer disease-afflicted brains (at protein level).

The protein localises to the endoplasmic reticulum membrane. It localises to the nucleus envelope. Its function is as follows. Involved in endoplasmic reticulum-associated protein degradation (ERAD). Acts as a platform to recruit both UBQLN1 and VCP to the ER during ERAD. The protein is UBX domain-containing protein 4 (UBXN4) of Homo sapiens (Human).